Here is a 154-residue protein sequence, read N- to C-terminus: 6,7-dimethyl-8-ribityllumazine synthase (154 aa).

5-amino-6-(D-ribitylamino)uracil is bound by residues Trp-22, 56–58, and 80–82; these read SHE and AVI. 85 to 86 contacts (2S)-2-hydroxy-3-oxobutyl phosphate; the sequence is DT. Residue His-88 is the Proton donor of the active site. Phe-113 contributes to the 5-amino-6-(D-ribitylamino)uracil binding site. Arg-127 serves as a coordination point for (2S)-2-hydroxy-3-oxobutyl phosphate.

Belongs to the DMRL synthase family.

The catalysed reaction is (2S)-2-hydroxy-3-oxobutyl phosphate + 5-amino-6-(D-ribitylamino)uracil = 6,7-dimethyl-8-(1-D-ribityl)lumazine + phosphate + 2 H2O + H(+). It participates in cofactor biosynthesis; riboflavin biosynthesis; riboflavin from 2-hydroxy-3-oxobutyl phosphate and 5-amino-6-(D-ribitylamino)uracil: step 1/2. Its function is as follows. Catalyzes the formation of 6,7-dimethyl-8-ribityllumazine by condensation of 5-amino-6-(D-ribitylamino)uracil with 3,4-dihydroxy-2-butanone 4-phosphate. This is the penultimate step in the biosynthesis of riboflavin. In Deinococcus geothermalis (strain DSM 11300 / CIP 105573 / AG-3a), this protein is 6,7-dimethyl-8-ribityllumazine synthase.